A 360-amino-acid chain; its full sequence is UDP-N-acetylglucosamine--N-acetylmuramyl-(pentapeptide) pyrophosphoryl-undecaprenol N-acetylglucosamine transferase (360 aa).

The UDP-N-acetyl-alpha-D-glucosamine site is built by S198 and Q289.

Belongs to the glycosyltransferase 28 family. MurG subfamily.

It is found in the cell membrane. The enzyme catalyses Mur2Ac(oyl-L-Ala-gamma-D-Glu-L-Lys-D-Ala-D-Ala)-di-trans,octa-cis-undecaprenyl diphosphate + UDP-N-acetyl-alpha-D-glucosamine = beta-D-GlcNAc-(1-&gt;4)-Mur2Ac(oyl-L-Ala-gamma-D-Glu-L-Lys-D-Ala-D-Ala)-di-trans,octa-cis-undecaprenyl diphosphate + UDP + H(+). It functions in the pathway cell wall biogenesis; peptidoglycan biosynthesis. Its function is as follows. Cell wall formation. Catalyzes the transfer of a GlcNAc subunit on undecaprenyl-pyrophosphoryl-MurNAc-pentapeptide (lipid intermediate I) to form undecaprenyl-pyrophosphoryl-MurNAc-(pentapeptide)GlcNAc (lipid intermediate II). In Streptococcus pyogenes serotype M3 (strain SSI-1), this protein is UDP-N-acetylglucosamine--N-acetylmuramyl-(pentapeptide) pyrophosphoryl-undecaprenol N-acetylglucosamine transferase.